A 344-amino-acid polypeptide reads, in one-letter code: Fructose-1,6-bisphosphatase class 1 (344 aa).

Glu107, Asp129, Leu131, and Asp132 together coordinate Mg(2+). Substrate contacts are provided by Asn224, Tyr252, and Lys282. Glu288 serves as a coordination point for Mg(2+).

The protein belongs to the FBPase class 1 family. Homotetramer. Mg(2+) serves as cofactor.

It is found in the cytoplasm. It carries out the reaction beta-D-fructose 1,6-bisphosphate + H2O = beta-D-fructose 6-phosphate + phosphate. It participates in carbohydrate biosynthesis; Calvin cycle. This chain is Fructose-1,6-bisphosphatase class 1, found in Synechococcus sp. (strain ATCC 27144 / PCC 6301 / SAUG 1402/1) (Anacystis nidulans).